The sequence spans 340 residues: Ketol-acid reductoisomerase (NADP(+)) (340 aa).

The region spanning 1 to 182 is the KARI N-terminal Rossmann domain; sequence MRVYYDRDCD…GGGRSGIIET (182 aa). NADP(+) contacts are provided by residues 24–27, arginine 48, serine 51, serine 53, and 83–86; these read YGSQ and DELQ. Histidine 108 is a catalytic residue. Glycine 134 serves as a coordination point for NADP(+). The KARI C-terminal knotted domain occupies 183–329; that stretch reads NFREECETDL…KELRGMMPWI (147 aa). Mg(2+)-binding residues include aspartate 191, glutamate 195, glutamate 227, and glutamate 231. Serine 252 is a substrate binding site.

This sequence belongs to the ketol-acid reductoisomerase family. Requires Mg(2+) as cofactor.

The catalysed reaction is (2R)-2,3-dihydroxy-3-methylbutanoate + NADP(+) = (2S)-2-acetolactate + NADPH + H(+). It carries out the reaction (2R,3R)-2,3-dihydroxy-3-methylpentanoate + NADP(+) = (S)-2-ethyl-2-hydroxy-3-oxobutanoate + NADPH + H(+). It functions in the pathway amino-acid biosynthesis; L-isoleucine biosynthesis; L-isoleucine from 2-oxobutanoate: step 2/4. It participates in amino-acid biosynthesis; L-valine biosynthesis; L-valine from pyruvate: step 2/4. Functionally, involved in the biosynthesis of branched-chain amino acids (BCAA). Catalyzes an alkyl-migration followed by a ketol-acid reduction of (S)-2-acetolactate (S2AL) to yield (R)-2,3-dihydroxy-isovalerate. In the isomerase reaction, S2AL is rearranged via a Mg-dependent methyl migration to produce 3-hydroxy-3-methyl-2-ketobutyrate (HMKB). In the reductase reaction, this 2-ketoacid undergoes a metal-dependent reduction by NADPH to yield (R)-2,3-dihydroxy-isovalerate. In Dinoroseobacter shibae (strain DSM 16493 / NCIMB 14021 / DFL 12), this protein is Ketol-acid reductoisomerase (NADP(+)).